Here is a 256-residue protein sequence, read N- to C-terminus: ATP synthase peripheral stalk subunit b, mitochondrial (256 aa).

The N-terminal 42 residues, M1–A42, are a transit peptide targeting the mitochondrion. K131 carries the post-translational modification N6-succinyllysine. K139, K154, K162, K221, K225, K233, and K244 each carry N6-acetyllysine.

It belongs to the eukaryotic ATPase B chain family. Component of the ATP synthase complex composed at least of ATP5F1A/subunit alpha, ATP5F1B/subunit beta, ATP5MC1/subunit c (homooctomer), MT-ATP6/subunit a, MT-ATP8/subunit 8, ATP5ME/subunit e, ATP5MF/subunit f, ATP5MG/subunit g, ATP5MK/subunit k, ATP5MJ/subunit j, ATP5F1C/subunit gamma, ATP5F1D/subunit delta, ATP5F1E/subunit epsilon, ATP5PF/subunit F6, ATP5PB/subunit b, ATP5PD/subunit d, ATP5PO/subunit OSCP. ATP synthase complex consists of a soluble F(1) head domain (subunits alpha(3) and beta(3)) - the catalytic core - and a membrane F(0) domain - the membrane proton channel (subunits c, a, 8, e, f, g, k and j). These two domains are linked by a central stalk (subunits gamma, delta, and epsilon) rotating inside the F1 region and a stationary peripheral stalk (subunits F6, b, d, and OSCP).

It is found in the mitochondrion. The protein localises to the mitochondrion inner membrane. In terms of biological role, subunit b, of the mitochondrial membrane ATP synthase complex (F(1)F(0) ATP synthase or Complex V) that produces ATP from ADP in the presence of a proton gradient across the membrane which is generated by electron transport complexes of the respiratory chain. ATP synthase complex consist of a soluble F(1) head domain - the catalytic core - and a membrane F(1) domain - the membrane proton channel. These two domains are linked by a central stalk rotating inside the F(1) region and a stationary peripheral stalk. During catalysis, ATP synthesis in the catalytic domain of F(1) is coupled via a rotary mechanism of the central stalk subunits to proton translocation. In vivo, can only synthesize ATP although its ATP hydrolase activity can be activated artificially in vitro. Part of the complex F(0) domain. Part of the complex F(0) domain and the peripheric stalk, which acts as a stator to hold the catalytic alpha(3)beta(3) subcomplex and subunit a/ATP6 static relative to the rotary elements. In Mus musculus (Mouse), this protein is ATP synthase peripheral stalk subunit b, mitochondrial.